We begin with the raw amino-acid sequence, 514 residues long: 2-isopropylmalate synthase (514 aa).

In terms of domain architecture, Pyruvate carboxyltransferase spans 5-267 (LVIFDTTLRD…DTRIHTPEIL (263 aa)). Residues Asp14, His202, His204, and Asn238 each contribute to the Mn(2+) site. Residues 394–514 (RLVALKVGTQ…GSKEHPQAHV (121 aa)) are regulatory domain.

The protein belongs to the alpha-IPM synthase/homocitrate synthase family. LeuA type 1 subfamily. As to quaternary structure, homodimer. Requires Mn(2+) as cofactor.

The protein resides in the cytoplasm. The enzyme catalyses 3-methyl-2-oxobutanoate + acetyl-CoA + H2O = (2S)-2-isopropylmalate + CoA + H(+). The protein operates within amino-acid biosynthesis; L-leucine biosynthesis; L-leucine from 3-methyl-2-oxobutanoate: step 1/4. Its function is as follows. Catalyzes the condensation of the acetyl group of acetyl-CoA with 3-methyl-2-oxobutanoate (2-ketoisovalerate) to form 3-carboxy-3-hydroxy-4-methylpentanoate (2-isopropylmalate). In Hydrogenovibrio crunogenus (strain DSM 25203 / XCL-2) (Thiomicrospira crunogena), this protein is 2-isopropylmalate synthase.